The primary structure comprises 417 residues: NADH-quinone oxidoreductase subunit D (417 aa).

Belongs to the complex I 49 kDa subunit family. In terms of assembly, NDH-1 is composed of 14 different subunits. Subunits NuoB, C, D, E, F, and G constitute the peripheral sector of the complex.

It is found in the cell inner membrane. The catalysed reaction is a quinone + NADH + 5 H(+)(in) = a quinol + NAD(+) + 4 H(+)(out). Functionally, NDH-1 shuttles electrons from NADH, via FMN and iron-sulfur (Fe-S) centers, to quinones in the respiratory chain. The immediate electron acceptor for the enzyme in this species is believed to be ubiquinone. Couples the redox reaction to proton translocation (for every two electrons transferred, four hydrogen ions are translocated across the cytoplasmic membrane), and thus conserves the redox energy in a proton gradient. This chain is NADH-quinone oxidoreductase subunit D, found in Burkholderia lata (strain ATCC 17760 / DSM 23089 / LMG 22485 / NCIMB 9086 / R18194 / 383).